Consider the following 667-residue polypeptide: Mannosyl-oligosaccharide alpha-1,2-mannosidase IA (667 aa).

Over 1-18 (MYRISPIGRKSNFHSREK) the chain is Cytoplasmic. The helical; Signal-anchor for type II membrane protein transmembrane segment at 19-39 (CLIGLVLVTLCFLCFGGIFLL) threads the bilayer. Residues 40–667 (PDNFGSDRVL…PVTLPVSNAS (628 aa)) are Lumenal-facing. The segment at 154 to 192 (GDNAASQASSHPQSSAQQHNQQQPQLPLGGGGNDQAPDT) is disordered. Residues 156-178 (NAASQASSHPQSSAQQHNQQQPQ) show a composition bias toward low complexity. An N-linked (GlcNAc...) asparagine glycan is attached at Asn278. Cys483 and Cys515 are oxidised to a cystine. Residue Glu529 is the Proton donor of the active site. Position 640 (Thr640) interacts with Ca(2+).

The protein belongs to the glycosyl hydrolase 47 family. The cofactor is Ca(2+). It depends on Mg(2+) as a cofactor. As to expression, complex spatial distribution during embryogenesis, including expression in lobula plate giant neurons. Also expressed in adult wing and eyes.

Its subcellular location is the golgi apparatus membrane. The catalysed reaction is N(4)-(alpha-D-Man-(1-&gt;2)-alpha-D-Man-(1-&gt;2)-alpha-D-Man-(1-&gt;3)-[alpha-D-Man-(1-&gt;2)-alpha-D-Man-(1-&gt;3)-[alpha-D-Man-(1-&gt;2)-alpha-D-Man-(1-&gt;6)]-alpha-D-Man-(1-&gt;6)]-beta-D-Man-(1-&gt;4)-beta-D-GlcNAc-(1-&gt;4)-beta-D-GlcNAc)-L-asparaginyl-[protein] (N-glucan mannose isomer 9A1,2,3B1,2,3) + 4 H2O = N(4)-(alpha-D-Man-(1-&gt;3)-[alpha-D-Man-(1-&gt;3)-[alpha-D-Man-(1-&gt;6)]-alpha-D-Man-(1-&gt;6)]-beta-D-Man-(1-&gt;4)-beta-D-GlcNAc-(1-&gt;4)-beta-D-GlcNAc)-L-asparaginyl-[protein] (N-glucan mannose isomer 5A1,2) + 4 beta-D-mannose. The enzyme catalyses N(4)-(alpha-D-Man-(1-&gt;2)-alpha-D-Man-(1-&gt;2)-alpha-D-Man-(1-&gt;3)-[alpha-D-Man-(1-&gt;3)-[alpha-D-Man-(1-&gt;2)-alpha-D-Man-(1-&gt;6)]-alpha-D-Man-(1-&gt;6)]-beta-D-Man-(1-&gt;4)-beta-D-GlcNAc-(1-&gt;4)-beta-D-GlcNAc)-L-asparaginyl-[protein] (N-glucan mannose isomer 8A1,2,3B1,3) + 3 H2O = N(4)-(alpha-D-Man-(1-&gt;3)-[alpha-D-Man-(1-&gt;3)-[alpha-D-Man-(1-&gt;6)]-alpha-D-Man-(1-&gt;6)]-beta-D-Man-(1-&gt;4)-beta-D-GlcNAc-(1-&gt;4)-beta-D-GlcNAc)-L-asparaginyl-[protein] (N-glucan mannose isomer 5A1,2) + 3 beta-D-mannose. Its pathway is protein modification; protein glycosylation. Functionally, involved in the maturation of Asn-linked oligosaccharides. Progressively trim alpha-1,2-linked mannose residues from Man(9)GlcNAc(2) to produce Man(5)GlcNAc(2). The polypeptide is Mannosyl-oligosaccharide alpha-1,2-mannosidase IA (Drosophila melanogaster (Fruit fly)).